Here is a 941-residue protein sequence, read N- to C-terminus: Glycine dehydrogenase (decarboxylating) (941 aa).

Lysine 692 carries the post-translational modification N6-(pyridoxal phosphate)lysine.

It belongs to the GcvP family. The glycine cleavage system is composed of four proteins: P, T, L and H. Pyridoxal 5'-phosphate is required as a cofactor.

The enzyme catalyses N(6)-[(R)-lipoyl]-L-lysyl-[glycine-cleavage complex H protein] + glycine + H(+) = N(6)-[(R)-S(8)-aminomethyldihydrolipoyl]-L-lysyl-[glycine-cleavage complex H protein] + CO2. Functionally, the glycine cleavage system catalyzes the degradation of glycine. The P protein binds the alpha-amino group of glycine through its pyridoxal phosphate cofactor; CO(2) is released and the remaining methylamine moiety is then transferred to the lipoamide cofactor of the H protein. The protein is Glycine dehydrogenase (decarboxylating) of Mycolicibacterium paratuberculosis (strain ATCC BAA-968 / K-10) (Mycobacterium paratuberculosis).